Reading from the N-terminus, the 817-residue chain is Protein-glutamine gamma-glutamyltransferase K (817 aa).

Disordered stretches follow at residues 1–38 and 59–105; these read MMDG…SRRG and DDWG…DGTI. The interval 1–100 is membrane anchorage region; it reads MMDGPRSDVG…VSRGSGVNAA (100 aa). Residues 17–26 are compositionally biased toward pro residues; that stretch reads LQPPTTPSPE. Thr-22 bears the Phosphothreonine mark. 6 positions are modified to phosphoserine: Ser-24, Ser-68, Ser-82, Ser-85, Ser-92, and Ser-95. The span at 71 to 84 shows a compositional bias: low complexity; sequence RGSSSGTRRPGSRG. Catalysis depends on residues Cys-377, His-436, and Asp-459. Residues Asn-499, Asp-501, Glu-548, and Glu-553 each contribute to the Ca(2+) site. The tract at residues 793 to 817 is disordered; the sequence is GGFFSDAGGDSHLGETIPMASRGGA.

The protein belongs to the transglutaminase superfamily. Transglutaminase family. As to quaternary structure, interacts with PLAAT4. The cofactor is Ca(2+). Post-translationally, palmitoylated. In terms of processing, the membrane anchorage region possesses a cluster of five cysteines within which fatty acid(s) may become thioester-linked. It is subject to phorbol ester-stimulated phosphorylation and is hypersensitive to proteolysis, which releases the enzyme in a soluble form. Tyrosine-phosphorylated.

It localises to the membrane. It carries out the reaction L-glutaminyl-[protein] + L-lysyl-[protein] = [protein]-L-lysyl-N(6)-5-L-glutamyl-[protein] + NH4(+). In terms of biological role, catalyzes the cross-linking of proteins and the conjugation of polyamines to proteins. Responsible for cross-linking epidermal proteins during formation of the stratum corneum. Involved in cell proliferation. The sequence is that of Protein-glutamine gamma-glutamyltransferase K (TGM1) from Homo sapiens (Human).